Consider the following 1166-residue polypeptide: Reverse gyrase 2 (1166 aa).

The RG N-terminal-type zinc-finger motif lies at 1 to 40 (MINVMYKNSCPNCGGDISGDRLLNGLPCEACLPYINGIDD). Zn(2+)-binding residues include Cys-10, Cys-13, Cys-28, and Cys-31. ATP is bound by residues Gln-92 and 109 to 116 (APTGLGKT). Residues 96-285 (LRRLASNQSF…ALRLLTGFEP (190 aa)) enclose the Helicase ATP-binding domain. The short motif at 190-193 (DDAD) is the DEAD box element. The interval 576-1166 (FNISTGLLIV…VNPLKSEQNV (591 aa)) is topoisomerase I. The Toprim domain occupies 580–743 (TGLLIVESPT…NVYRVVYHEI (164 aa)). Residue Glu-586 coordinates Mg(2+). Residues 662-689 (IKKCLDCNKIFSSASDKCPYCGSANLQS) form an RG C-terminal-type zinc finger. Zn(2+) contacts are provided by Cys-665, Cys-668, Cys-679, and Cys-682. A Mg(2+)-binding site is contributed by Asp-712. Residues 759–1157 (NTNLVMSQIV…EIFSEISTLV (399 aa)) form the Topo IA-type catalytic domain. Tyr-903 acts as the O-(5'-phospho-DNA)-tyrosine intermediate in catalysis.

In the N-terminal section; belongs to the DEAD box helicase family. DDVD subfamily. It in the C-terminal section; belongs to the type IA topoisomerase family. In terms of assembly, monomer. Zn(2+) serves as cofactor. Requires Mg(2+) as cofactor.

Its subcellular location is the cytoplasm. It carries out the reaction ATP + H2O = ADP + phosphate + H(+). At least one of the 2 proteins is inhibited by actinomycin D. Less sensitive to NaCl than TopR1, maximal positive supercoiling is observed with 100 mM NaCl; as NaCl rises higher than 400 mM supercoiling decreases. At 600 mM NaCl relaxes but does not introduce positive supercoils into negatively supercoiled substrate. In terms of biological role, modifies the topological state of DNA by introducing positive supercoils in an ATP-dependent process. A highly processive enzyme, it introduces a large number of positive supercoils directly in a negatively supercoiled substrate. At 75 degrees Celsius introduces more than 23 positive supercoils into pTZ18R DNA (probably 2860 bp), more than TopR1; unlike TopR1 little to no relaxation of the negatively supercoiled substrate is seen in the presence of ATP, in the absence of ATP no activity is seen. At 45 degrees Celsius the enzyme is slower and in vitro individual steps can be detected. It cleaves transiently a single DNA strand and remains covalently bound to the 5' DNA end through a tyrosine residue. May be involved in DNA damage response. May be involved in rewinding the DNA strands in the regions of the chromosome that have opened up to allow transcription or replication. Functionally, there are 2 genes for this protein in the cell. During exponential growth this is the more highly expressed isoform (about 125 molecules per cell at 80 degrees Celsius, about 117 molecules at 88 degrees Celsius); this isoform is less active at higher temperature. Grows actively at both 80 and 88 degrees Celsius; survives a long exposure at 45 degrees Celsius without DNA replication or cell division occurring. Experiments using whole cell extracts do not distinguish which isoform is present, the results are probably a mixture of the two forms. The sequence is that of Reverse gyrase 2 from Saccharolobus solfataricus (strain ATCC 35092 / DSM 1617 / JCM 11322 / P2) (Sulfolobus solfataricus).